The primary structure comprises 556 residues: Glutamine--tRNA ligase (556 aa).

The 'HIGH' region motif lies at 35–45; sequence PEPNGYLHIGH. ATP-binding positions include 36-38 and 42-48; these read EPN and HIGHAKS. L-glutamine is bound by residues Asp68 and Tyr213. Residues Thr232 and 262-263 each bind ATP; that span reads RL. Residues 269-273 carry the 'KMSKS' region motif; the sequence is VTSKR.

It belongs to the class-I aminoacyl-tRNA synthetase family. Monomer.

Its subcellular location is the cytoplasm. The enzyme catalyses tRNA(Gln) + L-glutamine + ATP = L-glutaminyl-tRNA(Gln) + AMP + diphosphate. This is Glutamine--tRNA ligase from Pseudomonas aeruginosa (strain ATCC 15692 / DSM 22644 / CIP 104116 / JCM 14847 / LMG 12228 / 1C / PRS 101 / PAO1).